The primary structure comprises 253 residues: Indole-3-glycerol phosphate synthase (253 aa).

This sequence belongs to the TrpC family.

The enzyme catalyses 1-(2-carboxyphenylamino)-1-deoxy-D-ribulose 5-phosphate + H(+) = (1S,2R)-1-C-(indol-3-yl)glycerol 3-phosphate + CO2 + H2O. Its pathway is amino-acid biosynthesis; L-tryptophan biosynthesis; L-tryptophan from chorismate: step 4/5. The chain is Indole-3-glycerol phosphate synthase from Bacillus cereus (strain ZK / E33L).